The sequence spans 306 residues: Manganese-binding lipoprotein MntA (306 aa).

The N-terminal stretch at 1–18 (MRQGLMAAVLFATFALTG) is a signal peptide. A lipid anchor (N-palmitoyl cysteine) is attached at Cys-19. Cys-19 carries the S-diacylglycerol cysteine lipid modification. The Mn(2+) site is built by His-66, His-132, His-198, and Asp-278.

Belongs to the bacterial solute-binding protein 9 family. As to quaternary structure, the complex is probably composed of two ATP-binding proteins (MntB), two transmembrane proteins (MntC and MntD) and a solute-binding protein (MntA). Interacts with FloT.

The protein localises to the cell membrane. It localises to the membrane raft. Its function is as follows. Probably part of ATP-binding cassette (ABC) transport system MntABCD involved in manganese import. Binds manganese and delivers it to the membrane permease for translocation into the cytoplasm. The chain is Manganese-binding lipoprotein MntA from Bacillus subtilis (strain 168).